We begin with the raw amino-acid sequence, 587 residues long: Cyclic di-GMP phosphodiesterase PA2567 (587 aa).

The region spanning 28 to 157 is the GAF domain; it reads DEVFEEILAA…LEHFARLVMA (130 aa). Positions 192–327 constitute a GGDEF domain; the sequence is GALTVIAADL…GVGWARYNPP (136 aa). One can recognise an EAL domain in the interval 335-587; it reads AFTLLTSLSQ…PEQLEDWLRR (253 aa).

It catalyses the reaction 3',3'-c-di-GMP + H2O = 5'-phosphoguanylyl(3'-&gt;5')guanosine + H(+). Phosphodiesterase (PDE) that catalyzes the hydrolysis of cyclic diguanylate (c-di-GMP) to 5'-pGpG. In Pseudomonas aeruginosa (strain ATCC 15692 / DSM 22644 / CIP 104116 / JCM 14847 / LMG 12228 / 1C / PRS 101 / PAO1), this protein is Cyclic di-GMP phosphodiesterase PA2567.